Here is a 182-residue protein sequence, read N- to C-terminus: Isopentenyl-diphosphate Delta-isomerase (182 aa).

Residues His-25 and His-32 each coordinate Mn(2+). Positions 30 to 164 (PLHLAFSCWL…PWAFSPWMVM (135 aa)) constitute a Nudix hydrolase domain. Cys-67 is a catalytic residue. Residue His-69 participates in Mn(2+) binding. Glu-87 serves as a coordination point for Mg(2+). The Mn(2+) site is built by Glu-114 and Glu-116. Residue Glu-116 is part of the active site.

This sequence belongs to the IPP isomerase type 1 family. As to quaternary structure, homodimer. Requires Mg(2+) as cofactor. The cofactor is Mn(2+).

Its subcellular location is the cytoplasm. It carries out the reaction isopentenyl diphosphate = dimethylallyl diphosphate. It participates in isoprenoid biosynthesis; dimethylallyl diphosphate biosynthesis; dimethylallyl diphosphate from isopentenyl diphosphate: step 1/1. In terms of biological role, catalyzes the 1,3-allylic rearrangement of the homoallylic substrate isopentenyl (IPP) to its highly electrophilic allylic isomer, dimethylallyl diphosphate (DMAPP). The sequence is that of Isopentenyl-diphosphate Delta-isomerase from Salmonella arizonae (strain ATCC BAA-731 / CDC346-86 / RSK2980).